Reading from the N-terminus, the 318-residue chain is Aspartate carbamoyltransferase catalytic subunit (318 aa).

Positions 66 and 67 each coordinate carbamoyl phosphate. Position 94 (Lys94) interacts with L-aspartate. Arg116, His144, and Gln147 together coordinate carbamoyl phosphate. Residues Arg177 and Arg231 each contribute to the L-aspartate site. 2 residues coordinate carbamoyl phosphate: Gly272 and Pro273.

The protein belongs to the aspartate/ornithine carbamoyltransferase superfamily. ATCase family. As to quaternary structure, heterododecamer (2C3:3R2) of six catalytic PyrB chains organized as two trimers (C3), and six regulatory PyrI chains organized as three dimers (R2).

The catalysed reaction is carbamoyl phosphate + L-aspartate = N-carbamoyl-L-aspartate + phosphate + H(+). The protein operates within pyrimidine metabolism; UMP biosynthesis via de novo pathway; (S)-dihydroorotate from bicarbonate: step 2/3. In terms of biological role, catalyzes the condensation of carbamoyl phosphate and aspartate to form carbamoyl aspartate and inorganic phosphate, the committed step in the de novo pyrimidine nucleotide biosynthesis pathway. The protein is Aspartate carbamoyltransferase catalytic subunit of Frankia casuarinae (strain DSM 45818 / CECT 9043 / HFP020203 / CcI3).